Here is a 112-residue protein sequence, read N- to C-terminus: Large ribosomal subunit protein uL22 (112 aa).

It belongs to the universal ribosomal protein uL22 family. In terms of assembly, part of the 50S ribosomal subunit.

Functionally, this protein binds specifically to 23S rRNA; its binding is stimulated by other ribosomal proteins, e.g. L4, L17, and L20. It is important during the early stages of 50S assembly. It makes multiple contacts with different domains of the 23S rRNA in the assembled 50S subunit and ribosome. The globular domain of the protein is located near the polypeptide exit tunnel on the outside of the subunit, while an extended beta-hairpin is found that lines the wall of the exit tunnel in the center of the 70S ribosome. This Nitratidesulfovibrio vulgaris (strain DSM 19637 / Miyazaki F) (Desulfovibrio vulgaris) protein is Large ribosomal subunit protein uL22.